A 152-amino-acid chain; its full sequence is Large ribosomal subunit protein bL9 (152 aa).

This sequence belongs to the bacterial ribosomal protein bL9 family.

Binds to the 23S rRNA. The protein is Large ribosomal subunit protein bL9 of Nostoc sp. (strain PCC 7120 / SAG 25.82 / UTEX 2576).